A 113-amino-acid polypeptide reads, in one-letter code: Large ribosomal subunit protein bL17 (113 aa).

Belongs to the bacterial ribosomal protein bL17 family. Part of the 50S ribosomal subunit. Contacts protein L32.

This Clostridium kluyveri (strain NBRC 12016) protein is Large ribosomal subunit protein bL17.